A 323-amino-acid polypeptide reads, in one-letter code: Acetyl esterase (323 aa).

The Involved in the stabilization of the negatively charged intermediate by the formation of the oxyanion hole signature appears at 91 to 93; it reads HGG. Residues Ser165, Asp262, and His292 contribute to the active site.

Belongs to the 'GDXG' lipolytic enzyme family. As to quaternary structure, homodimer. Interacts with MalT and MelA.

The protein localises to the cytoplasm. In terms of biological role, displays esterase activity towards short chain fatty esters (acyl chain length of up to 8 carbons). Able to hydrolyze triacetylglycerol (triacetin) and tributyrylglycerol (tributyrin), but not trioleylglycerol (triolein) or cholesterol oleate. Negatively regulates MalT activity by antagonizing maltotriose binding. Inhibits MelA galactosidase activity. The chain is Acetyl esterase from Salmonella paratyphi B (strain ATCC BAA-1250 / SPB7).